Consider the following 267-residue polypeptide: L-erythrulose-1-phosphate isomerase (267 aa).

His-95 (electrophile) is an active-site residue. Catalysis depends on Glu-168, which acts as the Proton acceptor. Residues Gly-174 and Ser-211 each coordinate substrate.

This sequence belongs to the triosephosphate isomerase family. Homodimer.

Its subcellular location is the cytoplasm. It catalyses the reaction L-erythrulose 1-phosphate = D-erythrulose 4-phosphate. Its pathway is carbohydrate metabolism; erythritol degradation. Functionally, catalyzes the isomerization of D-erythrulose-4P to L-erythrulose-1P. The sequence is that of L-erythrulose-1-phosphate isomerase from Rhizobium etli (strain ATCC 51251 / DSM 11541 / JCM 21823 / NBRC 15573 / CFN 42).